A 434-amino-acid polypeptide reads, in one-letter code: Glutamate-1-semialdehyde 2,1-aminomutase (434 aa).

At Lys-270 the chain carries N6-(pyridoxal phosphate)lysine.

The protein belongs to the class-III pyridoxal-phosphate-dependent aminotransferase family. HemL subfamily. Homodimer. Pyridoxal 5'-phosphate is required as a cofactor.

The protein localises to the cytoplasm. The catalysed reaction is (S)-4-amino-5-oxopentanoate = 5-aminolevulinate. Its pathway is porphyrin-containing compound metabolism; protoporphyrin-IX biosynthesis; 5-aminolevulinate from L-glutamyl-tRNA(Glu): step 2/2. This chain is Glutamate-1-semialdehyde 2,1-aminomutase, found in Pelotomaculum thermopropionicum (strain DSM 13744 / JCM 10971 / SI).